We begin with the raw amino-acid sequence, 204 residues long: Large ribosomal subunit protein uL4 (204 aa).

The tract at residues 49–74 (AKKRGEVSGGGKKPWSQKGGGRARAG) is disordered. Positions 55–71 (VSGGGKKPWSQKGGGRA) are enriched in gly residues.

It belongs to the universal ribosomal protein uL4 family. In terms of assembly, part of the 50S ribosomal subunit.

Functionally, one of the primary rRNA binding proteins, this protein initially binds near the 5'-end of the 23S rRNA. It is important during the early stages of 50S assembly. It makes multiple contacts with different domains of the 23S rRNA in the assembled 50S subunit and ribosome. In terms of biological role, forms part of the polypeptide exit tunnel. In Wolinella succinogenes (strain ATCC 29543 / DSM 1740 / CCUG 13145 / JCM 31913 / LMG 7466 / NCTC 11488 / FDC 602W) (Vibrio succinogenes), this protein is Large ribosomal subunit protein uL4.